The sequence spans 283 residues: MMNEVLLKFKQLDLSPYIQPLPEKPAEKLKVYGIDGAYVADIEAPLHFLEPIRPDLIRRAYLSALSARFQPKGVYEGAGKEHSCESFGVGLGIARIPRYKGSLWPRGCFAPNTRGGRRAHPPKVEKKLHEEINKKEKKLAIRSAIAATAYRSWVAARGHVVEKVPSLPVVVVGDAEKINRAKEAKKLFEALGLWPDVERAAEGVKIRAGKGKMRGRRYKEPKSVLVVVSDLNAPLIAAVRNFPGVDVVAVNNLNILVLAPGGVPGRLTLWTAPAVEKLRGLFL.

This sequence belongs to the universal ribosomal protein uL4 family. As to quaternary structure, part of the 50S ribosomal subunit.

Functionally, one of the primary rRNA binding proteins, this protein initially binds near the 5'-end of the 23S rRNA. It is important during the early stages of 50S assembly. It makes multiple contacts with different domains of the 23S rRNA in the assembled 50S subunit and ribosome. Its function is as follows. Forms part of the polypeptide exit tunnel. The polypeptide is Large ribosomal subunit protein uL4 (Pyrobaculum aerophilum (strain ATCC 51768 / DSM 7523 / JCM 9630 / CIP 104966 / NBRC 100827 / IM2)).